Here is a 611-residue protein sequence, read N- to C-terminus: MFRAQQNAFDDAVAKATDENLTSENWEYILDVCDKVGAEESGAKDAVAAMIKRLAHRNANVQLYTLELANALAQNCGPKIHRELASRSFTDALLRLANDRNTHQQVKSKILERMQEWTEMFASNPDFGIMEQAYMKLKTQNPNLQPPSKPGKREITDADRQKEEEELQMALALSIREKATIAPAPQAEASSSAAPVNQTQAPAATSQAVPSGTSAATVSRVRALFDFQPSEPGELQFRKGDVIAVLESVYKDWWKGSLRGQTGIFPLNYVEKLPDPTVEELQREAQMEADVFGQIKNVEKLLTLLSTRSSELNVQDNEEITALYHSTLAIRPKLIELIGKYSQKKDEFTQLNEKFIKARRDYESLLEASMAHPAQSQYGRPAQPPYGYPGAAPVGYPQGPPQADPQRYFSPRPQETQAPPANAPAFYGTEQAHAYPPTSQSPDPRQTPPAGAPYQQPQPQQQRQPSSESYQPVYHRPESTYENPQELGTSVYDSPVEHPASQRPPYPGAVQVPAAVQQHFQQQQQQPQQQSQQPHPEYPASGYTPEDASRPPAHQAQPPYPSHQPPPMHQPPPVPGTSTTPTPYPALNAGGGYQAYNPSQTDVSNPASFYR.

Positions 16-145 constitute a VHS domain; sequence ATDENLTSEN…KLKTQNPNLQ (130 aa). 2 disordered regions span residues 140 to 163 and 182 to 211; these read QNPN…RQKE and APAP…AVPS. Residues 151 to 163 are compositionally biased toward basic and acidic residues; the sequence is GKREITDADRQKE. The UIM domain occupies 162 to 181; the sequence is KEEEELQMALALSIREKATI. Positions 182–195 are enriched in low complexity; sequence APAPQAEASSSAAP. A compositionally biased stretch (polar residues) spans 196-211; the sequence is VNQTQAPAATSQAVPS. An SH3 domain is found at 216 to 275; it reads ATVSRVRALFDFQPSEPGELQFRKGDVIAVLESVYKDWWKGSLRGQTGIFPLNYVEKLPD. Residues 373–611 are disordered; the sequence is PAQSQYGRPA…DVSNPASFYR (239 aa). 2 stretches are compositionally biased toward low complexity: residues 388–397 and 452–472; these read YPGAAPVGYP and APYQ…SYQP. Over residues 480–492 the composition is skewed to polar residues; it reads TYENPQELGTSVY. A compositionally biased stretch (low complexity) spans 509–534; it reads AVQVPAAVQQHFQQQQQQPQQQSQQP. Residues 558 to 575 are compositionally biased toward pro residues; sequence PPYPSHQPPPMHQPPPVP. The span at 596 to 611 shows a compositional bias: polar residues; sequence YNPSQTDVSNPASFYR.

It belongs to the STAM family. Component of the ESCRT-0 complex composed of HSE1 and VPS27.

Its subcellular location is the endosome membrane. Component of the ESCRT-0 complex which is the sorting receptor for ubiquitinated cargo proteins at the multivesicular body (MVB). This chain is Class E vacuolar protein-sorting machinery protein hse1 (hse1), found in Aspergillus niger (strain ATCC MYA-4892 / CBS 513.88 / FGSC A1513).